The primary structure comprises 516 residues: Glucose-6-phosphate 1-dehydrogenase 5, cytoplasmic (516 aa).

NADP(+) is bound by residues glycine 38–lysine 45, arginine 73, tyrosine 156, and lysine 183. Residues lysine 183, histidine 213–lysine 217, glutamate 251, and aspartate 270 each bind D-glucose 6-phosphate. Catalysis depends on histidine 275, which acts as the Proton acceptor. Lysine 358 lines the NADP(+) pocket. Residues lysine 361 and lysine 366 each coordinate D-glucose 6-phosphate. NADP(+) contacts are provided by lysine 367, arginine 371, and arginine 395. Glutamine 397 provides a ligand contact to D-glucose 6-phosphate. Residues tyrosine 403 to lysine 405, aspartate 423 to serine 425, arginine 489, and tryptophan 511 contribute to the NADP(+) site.

Belongs to the glucose-6-phosphate dehydrogenase family. In terms of assembly, forms homodimer. Expressed in leaves and stems.

Its subcellular location is the cytoplasm. It localises to the cytosol. The catalysed reaction is D-glucose 6-phosphate + NADP(+) = 6-phospho-D-glucono-1,5-lactone + NADPH + H(+). It participates in carbohydrate degradation; pentose phosphate pathway; D-ribulose 5-phosphate from D-glucose 6-phosphate (oxidative stage): step 1/3. Its activity is regulated as follows. Regulated by metabolites. Catalyzes the rate-limiting step of the oxidative pentose-phosphate pathway, which represents a route for the dissimilation of carbohydrates besides glycolysis. The main function of this enzyme is to provide reducing power (NADPH) and pentose phosphates for fatty acid and nucleic acid synthesis which are involved in membrane synthesis and cell division. In Arabidopsis thaliana (Mouse-ear cress), this protein is Glucose-6-phosphate 1-dehydrogenase 5, cytoplasmic.